Consider the following 663-residue polypeptide: MSHDRSVNVSHDAVIAKPERGTMLQSFSPRSHGSKGYSLPQDSEENRGSVGQSAGQSSTSVVDQVRSPADDAGVTSSSTICPAPVCRQFWKAGSYNDELSSKSQQPNGKNYLHVHPMFLHSNATSHKWAFGAVAELLDNAVDEIQNGATFVIVDKTTNPRDGATALLIQDDGGGMDPQAMRHCMGFGFSDKKSDSAIGRYGNGFKTSTMRLGADVIVFSRHSKNQTLTQSIGLLSYTYLTRTGHDRIVVPILDYEFNASAGEFKTLQDREHFISSLSILLEWSPFSTEAELLQQFDDVGPHGTKVIIYNMWLNSDAKLELDFDSVAEDILIEGSIKKTGSKIVNDHIASRFSYSLRVYLSILYLRIPETFKIILRGKVVEHHNVADDLMHPQYILYKPQAAGSEEALVVTTIGFLKEAPKVNLHGFCVYHKNRLIMPFWQVINYSSSRGRGVVGVLEANFVEPTHNKQDFEKTVLLQKLENRLKEMTVEYWSCHCVLIGYQVNKKPRLQIPQKVQPAGRQALSPPPGFQAVFPQGNTTSLPRVSTQPVLLEKRKEHPDSVASAALKRKVGNDDFTVPGHIRVEQFIHGSASQSQDIETVKLMEENKKLRAKCLDRKVRSQNLEVKAMNLRSELENYKSEYERLMVELQALDLVKDEHRRNVNT.

A disordered region spans residues 1 to 77 (MSHDRSVNVS…PADDAGVTSS (77 aa)). Residues 49-62 (SVGQSAGQSSTSVV) are compositionally biased toward polar residues. Positions 552–559 (KRKEHPDS) match the Nuclear localization signal motif. A coiled-coil region spans residues 614 to 659 (DRKVRSQNLEVKAMNLRSELENYKSEYERLMVELQALDLVKDEHRR).

It belongs to the MORC ATPase protein family. Homodimer and heterodimers with MORC1/CRT1 and MORC2. Interacts directly with SUVH9. Component of an RNA-directed DNA methylation (RdDM) complex that contains at least MORC6, MORC1/CRT1, MORC2, SWI3D and SUVH9. Stimulated by interaction with DMS3. Interacts with IDN2, SWI3B, SWI3C and SWI3D. Mg(2+) serves as cofactor. The cofactor is Mn(2+).

The protein localises to the nucleus. With respect to regulation, stimulated by DMS3. Its function is as follows. Involved in RNA-directed DNA methylation (RdDM) as a component of the RdDM machinery and required for gene silencing. Together with SUVH2 and SUVH9, regulates the silencing of some transposable elements (TEs). Exhibits ATPase activity. May also be involved in the regulation of chromatin architecture/condensation to maintain gene silencing. Binds DNA/RNA in a non-specific manner and exhibits endonuclease activity. Probably involved in DNA repair. Positive regulator of defense against the oomycete Hyaloperonospora arabidopsidis (Hpa). In Arabidopsis thaliana (Mouse-ear cress), this protein is Protein MICRORCHIDIA 6.